A 232-amino-acid polypeptide reads, in one-letter code: Ion-translocating oxidoreductase complex subunit E (232 aa).

5 consecutive transmembrane segments (helical) span residues 39–59, 69–89, 92–112, 125–145, and 182–202; these read LGLG…ISSL, IPIY…LINA, FGLY…CIVV, ALSA…MFVL, and PFLL…MLAV.

This sequence belongs to the NqrDE/RnfAE family. In terms of assembly, the complex is composed of six subunits: RnfA, RnfB, RnfC, RnfD, RnfE and RnfG.

It is found in the cell inner membrane. Part of a membrane-bound complex that couples electron transfer with translocation of ions across the membrane. The sequence is that of Ion-translocating oxidoreductase complex subunit E from Klebsiella pneumoniae (strain 342).